Consider the following 339-residue polypeptide: Paired box protein Pax-9 (339 aa).

The segment at residues 2-128 is a DNA-binding region (paired); it reads AFGEVNQLGG…SSISRILRNK (127 aa). The PAI subdomain stretch occupies residues 5–61; that stretch reads EVNQLGGVFVNGRPLPNAIRLRIVELAQLGIRPCDISRQLRVSHGCVSKILARYNET. Residues 80–128 are RED subdomain; it reads TVVKHIRTYKQRDPGIFAWEIRDRLLADGVCDKYNVPSVSSISRILRNK.

It is found in the nucleus. In Gallus gallus (Chicken), this protein is Paired box protein Pax-9 (PAX9).